Reading from the N-terminus, the 373-residue chain is Muscleblind-like protein 2 (373 aa).

4 C3H1-type zinc fingers span residues 13–41 (WLTL…HPPK), 47–73 (NGRV…HPPT), 176–204 (TDKL…HPAD), and 212–238 (DNTV…HPPA).

Belongs to the muscleblind family. In terms of assembly, interacts with ITGA3.

It localises to the nucleus. The protein localises to the cytoplasm. Functionally, mediates pre-mRNA alternative splicing regulation. Acts either as activator or repressor of splicing on specific pre-mRNA targets. Inhibits cardiac troponin-T (TNNT2) pre-mRNA exon inclusion but induces insulin receptor (IR) pre-mRNA exon inclusion in muscle. Antagonizes the alternative splicing activity pattern of CELF proteins. RNA-binding protein that binds to 5'ACACCC-3' core sequence, termed zipcode, within the 3'UTR of ITGA3. Binds to CUG triplet repeat expansion in myotonic dystrophy muscle cells by sequestering the target RNAs. Together with RNA binding proteins RBPMS and RBFOX2, activates vascular smooth muscle cells alternative splicing events. Regulates NCOR2 alternative splicing. Seems to regulate expression and localization of ITGA3 by transporting it from the nucleus to cytoplasm at adhesion plaques. May play a role in myotonic dystrophy pathophysiology (DM). In Mus musculus (Mouse), this protein is Muscleblind-like protein 2 (Mbnl2).